The sequence spans 231 residues: ABC transporter ATP-binding protein YtrE (231 aa).

Positions 4-231 constitute an ABC transporter domain; sequence VQHIDHSFTI…VLKGGITVEV (228 aa). ATP is bound at residue 42 to 49; the sequence is GRSGSGKS.

This sequence belongs to the ABC transporter superfamily. The complex is composed of 2 ATP-binding proteins (YtrB and YtrE), 2 transmembrane proteins (YtrC and YtrD) and a solute-binding protein (YtrF).

The protein localises to the cell membrane. Its function is as follows. Part of the ABC transporter complex YtrBCDEF that plays a role in acetoin utilization during stationary phase and sporulation. The chain is ABC transporter ATP-binding protein YtrE (ytrE) from Bacillus subtilis (strain 168).